Here is a 387-residue protein sequence, read N- to C-terminus: Alkanesulfonate monooxygenase (387 aa).

The protein belongs to the SsuD family.

The enzyme catalyses an alkanesulfonate + FMNH2 + O2 = an aldehyde + FMN + sulfite + H2O + 2 H(+). Its function is as follows. Catalyzes the desulfonation of aliphatic sulfonates. This chain is Alkanesulfonate monooxygenase, found in Xanthomonas axonopodis pv. citri (strain 306).